Reading from the N-terminus, the 316-residue chain is Probable cell division protein WhiA (316 aa).

A DNA-binding region (H-T-H motif) is located at residues 275-309 (TLKELGEMVESGKISKSGINHRLRKLDQIAEQLRN).

The protein belongs to the WhiA family.

In terms of biological role, involved in cell division and chromosome segregation. This is Probable cell division protein WhiA from Bacillus pumilus (strain SAFR-032).